A 176-amino-acid chain; its full sequence is Inner membrane-spanning protein YciB (176 aa).

Helical transmembrane passes span 24 to 44 (TATAVAIGATLVQIAWVAFRH), 49 to 69 (PMLWVSLGVVTVFGGATLVLH), 76 to 96 (WKPTVLYWAFSVVLVVSALGF), 121 to 141 (YVWAVFFVLLGILNLFVAYNF), and 149 to 169 (FKLFGATGCLVVFIVGQSLWL).

It belongs to the YciB family.

Its subcellular location is the cell inner membrane. Its function is as follows. Plays a role in cell envelope biogenesis, maintenance of cell envelope integrity and membrane homeostasis. This is Inner membrane-spanning protein YciB from Paraburkholderia phymatum (strain DSM 17167 / CIP 108236 / LMG 21445 / STM815) (Burkholderia phymatum).